The primary structure comprises 358 residues: MLSIRRSLTLAKEPKDLFLFLCNLRARCVSTDDYDPPFSPLSKPTKPPKEKKKQKTKKQDQSSELVNDLKIPVISDLPFDFRYSYSETNPEIEPIGFREPKRFSPFGPGRLDRKWTGTTALASPEIDQSQWVEERARVLGETLTEDEVTELIERYRHSDCTRQINLGKGGVTHNMIDDIHNHWKKAEAVRIKCLGVPTLDMDNICFHLEEKSGGKIVYRNINILVLYRGRNYDPKSRPIIPLMLWKPHPPIYPRLVKNVADGLEFEETKEMRNRGLHSPALMKLTRNGVYVNVVGRVREEFETEEIVRLDCTHVGMSDCKRIGVKLKEMVPCVPILFKDEQIILWRGKRTGEEELVTL.

Residues 1-28 constitute a mitochondrion transit peptide; sequence MLSIRRSLTLAKEPKDLFLFLCNLRARC. Residues 35–64 form a disordered region; sequence DPPFSPLSKPTKPPKEKKKQKTKKQDQSSE. 2 CRM domains span residues 141-239 and 261-357; these read ETLT…SRPI and DGLE…ELVT.

In terms of assembly, part of large ribonucleo-protein complexes that include group IIB introns.

Its subcellular location is the mitochondrion. In terms of biological role, may be involved in the splicing of group IIB introns in mitochondria. The polypeptide is CRS2-associated factor 2, mitochondrial (Arabidopsis thaliana (Mouse-ear cress)).